We begin with the raw amino-acid sequence, 401 residues long: Imidazolonepropionase (401 aa).

Residues histidine 66 and histidine 68 each coordinate Fe(3+). Residues histidine 66 and histidine 68 each contribute to the Zn(2+) site. The 4-imidazolone-5-propanoate site is built by arginine 75, tyrosine 138, and histidine 171. Tyrosine 138 is an N-formimidoyl-L-glutamate binding site. Residue histidine 236 coordinates Fe(3+). Residue histidine 236 coordinates Zn(2+). Glutamine 239 contacts 4-imidazolone-5-propanoate. Aspartate 311 is a binding site for Fe(3+). Aspartate 311 provides a ligand contact to Zn(2+). Positions 313 and 315 each coordinate N-formimidoyl-L-glutamate. Position 316 (threonine 316) interacts with 4-imidazolone-5-propanoate.

The protein belongs to the metallo-dependent hydrolases superfamily. HutI family. The cofactor is Zn(2+). Fe(3+) serves as cofactor.

The protein resides in the cytoplasm. The enzyme catalyses 4-imidazolone-5-propanoate + H2O = N-formimidoyl-L-glutamate. Its pathway is amino-acid degradation; L-histidine degradation into L-glutamate; N-formimidoyl-L-glutamate from L-histidine: step 3/3. In terms of biological role, catalyzes the hydrolytic cleavage of the carbon-nitrogen bond in imidazolone-5-propanoate to yield N-formimidoyl-L-glutamate. It is the third step in the universal histidine degradation pathway. The polypeptide is Imidazolonepropionase (Acinetobacter baumannii (strain AB0057)).